We begin with the raw amino-acid sequence, 355 residues long: UDP-N-acetylglucosamine--N-acetylmuramyl-(pentapeptide) pyrophosphoryl-undecaprenol N-acetylglucosamine transferase (355 aa).

UDP-N-acetyl-alpha-D-glucosamine is bound by residues 14-16, Asn-126, Arg-162, Ser-190, Ile-244, and Gln-289; that span reads TGG.

Belongs to the glycosyltransferase 28 family. MurG subfamily.

It is found in the cell inner membrane. The enzyme catalyses di-trans,octa-cis-undecaprenyl diphospho-N-acetyl-alpha-D-muramoyl-L-alanyl-D-glutamyl-meso-2,6-diaminopimeloyl-D-alanyl-D-alanine + UDP-N-acetyl-alpha-D-glucosamine = di-trans,octa-cis-undecaprenyl diphospho-[N-acetyl-alpha-D-glucosaminyl-(1-&gt;4)]-N-acetyl-alpha-D-muramoyl-L-alanyl-D-glutamyl-meso-2,6-diaminopimeloyl-D-alanyl-D-alanine + UDP + H(+). The protein operates within cell wall biogenesis; peptidoglycan biosynthesis. In terms of biological role, cell wall formation. Catalyzes the transfer of a GlcNAc subunit on undecaprenyl-pyrophosphoryl-MurNAc-pentapeptide (lipid intermediate I) to form undecaprenyl-pyrophosphoryl-MurNAc-(pentapeptide)GlcNAc (lipid intermediate II). In Paracidovorax citrulli (strain AAC00-1) (Acidovorax citrulli), this protein is UDP-N-acetylglucosamine--N-acetylmuramyl-(pentapeptide) pyrophosphoryl-undecaprenol N-acetylglucosamine transferase.